Here is a 129-residue protein sequence, read N- to C-terminus: Transcriptional regulator WhiB2 (129 aa).

Positions 23-45 (SHAPHIDTGSTPTGAAGRPQLSL) are disordered. Residues 66–123 (LCAQTDPEAFFPEKGGSTREAKRICQGCEVRDACLEYALAHDERFGIWGGLSERERRR) enclose the 4Fe-4S Wbl-type domain. Residues Cys67, Cys90, Cys93, and Cys99 each contribute to the [4Fe-4S] cluster site.

It belongs to the WhiB family. It depends on [4Fe-4S] cluster as a cofactor. The Fe-S cluster can be nitrosylated by nitric oxide (NO). In terms of processing, upon Fe-S cluster removal intramolecular disulfide bonds are formed.

It is found in the cytoplasm. Acts as a transcriptional regulator. Probably redox-responsive. The apo- but not holo-form probably binds DNA. The polypeptide is Transcriptional regulator WhiB2 (whiB2) (Mycolicibacterium smegmatis (strain ATCC 700084 / mc(2)155) (Mycobacterium smegmatis)).